The chain runs to 609 residues: Alpha-glycerophosphate oxidase (609 aa).

FAD is bound at residue 21–49; sequence DLLVIGGGITGAGLTLQAAAAGMKVAVLE.

This sequence belongs to the FAD-dependent glycerol-3-phosphate dehydrogenase family. Requires FAD as cofactor.

The protein localises to the cytoplasm. The enzyme catalyses sn-glycerol 3-phosphate + O2 = dihydroxyacetone phosphate + H2O2. This chain is Alpha-glycerophosphate oxidase (glpO), found in Lactococcus lactis subsp. lactis (strain IL1403) (Streptococcus lactis).